Reading from the N-terminus, the 191-residue chain is Small ribosomal subunit protein uS10c (191 aa).

Residues 1–56 (MAVSTVSSFLLPSFGIPSSSPSSTRLKVSLLPSSSTHGGLSSCVLTKPSVSLTKVF) constitute a chloroplast transit peptide.

The protein belongs to the universal ribosomal protein uS10 family. As to quaternary structure, part of the 30S ribosomal subunit.

Its subcellular location is the plastid. The protein resides in the chloroplast. This is Small ribosomal subunit protein uS10c (RPS10) from Arabidopsis thaliana (Mouse-ear cress).